The sequence spans 1073 residues: 3-hydroxy-3-methylglutaryl-coenzyme A reductase 1 (1073 aa).

The next 8 membrane-spanning stretches (helical) occupy residues 23 to 43 (FMVVPALLASIAYLSIIDDYI), 181 to 201 (FDILLIFVAYLGMWYALIKVF), 211 to 231 (FWLAFSTLTSSTFAFLLALLV), 298 to 318 (HLVVIGGLLSCAIYAHHLTGL), 326 to 346 (SLILSFDLILVYTFFSAILGL), 399 to 419 (IAYFKVIMSLGFFAFHAFWLG), 459 to 479 (GTVVTILPTIFFMPSGFMVQL), and 498 to 518 (IISKFLVFGFALSIVTNVYFL). In terms of domain architecture, SSD spans 182–346 (DILLIFVAYL…YTFFSAILGL (165 aa)). Positions 542 to 565 (SSVTATTTTTATGTTSSGAATSKT) are enriched in low complexity. Residues 542-589 (SSVTATTTTTATGTTSSGAATSKTIGNNKGLKSVQEIPDNEDESSDEE) form a disordered region. Positions 579–589 (PDNEDESSDEE) are enriched in acidic residues. Glutamate 714 acts as the Charge relay system in catalysis. 720–726 (STMRGCK) lines the CoA pocket. Residues 781 to 783 (SRF) and 808 to 816 (DAMGMNMIS) each bind NADP(+). The active-site Charge relay system is the lysine 848. 877–879 (VLK) is a CoA binding site. Aspartate 924 functions as the Charge relay system in the catalytic mechanism. Residues 997-1017 (IVASAVLAAELSLCSALAAGH) form a helical membrane-spanning segment. Residue 1021–1022 (SH) coordinates CoA. The active-site Proton donor is the histidine 1022. Positions 1025-1056 (HNRSKAPAAGATTTTTPAITDSKASNGSIASN) are disordered. 1026–1027 (NR) lines the NADP(+) pocket. Positions 1030 to 1042 (APAAGATTTTTPA) are enriched in low complexity. The span at 1046 to 1055 (SKASNGSIAS) shows a compositional bias: polar residues.

It belongs to the HMG-CoA reductase family.

It is found in the endoplasmic reticulum membrane. It catalyses the reaction (R)-mevalonate + 2 NADP(+) + CoA = (3S)-3-hydroxy-3-methylglutaryl-CoA + 2 NADPH + 2 H(+). The protein operates within metabolic intermediate biosynthesis; (R)-mevalonate biosynthesis; (R)-mevalonate from acetyl-CoA: step 3/3. Its function is as follows. HMG-CoA reductase; part of the first module of ergosterol biosynthesis pathway that includes the early steps of the pathway, conserved across all eukaryotes, and which results in the formation of mevalonate from acetyl-coenzyme A (acetyl-CoA). HMG1 catalyzes the reduction of hydroxymethylglutaryl-CoA (HMG-CoA) to mevalonate. The first module starts with the action of the cytosolic acetyl-CoA acetyltransferase ERG10 that catalyzes the formation of acetoacetyl-CoA. The hydroxymethylglutaryl-CoA synthase ERG13 then condenses acetyl-CoA with acetoacetyl-CoA to form HMG-CoA. The 3-hydroxy-3-methylglutaryl-coenzyme A (HMG-CoA) reductase HMG1 finally reduces HMG-CoA to produce mevalonate. The protein is 3-hydroxy-3-methylglutaryl-coenzyme A reductase 1 of Candida albicans (strain SC5314 / ATCC MYA-2876) (Yeast).